The chain runs to 449 residues: Probable rhamnogalacturonase E (449 aa).

The signal sequence occupies residues 1-21; sequence MRSKTFSVLSSCLLLIATVQG. The cysteines at positions 42 and 68 are disulfide-linked. 3 N-linked (GlcNAc...) asparagine glycosylation sites follow: Asn53, Asn91, and Asn106. The Proton donor role is filled by Asp221. Cysteines 223 and 240 form a disulfide. N-linked (GlcNAc...) asparagine glycosylation is found at Asn241 and Asn256. His296 is an active-site residue. An N-linked (GlcNAc...) asparagine glycan is attached at Asn323. 2 cysteine pairs are disulfide-bonded: Cys346–Cys352 and Cys374–Cys383.

The protein belongs to the glycosyl hydrolase 28 family.

It is found in the secreted. It carries out the reaction Endohydrolysis of alpha-D-GalA-(1-&gt;2)-alpha-L-Rha glycosidic bond in the rhamnogalacturonan I backbone with initial inversion of anomeric configuration releasing oligosaccharides with beta-D-GalA at the reducing end.. Pectinolytic enzymes consist of four classes of enzymes: pectine lyase, polygalacturonase, pectin methylesterase and rhamnogalacturonase. Hydrolyzes alpha-D-galacturonopyranosyl-(1,2)-alpha-L-rhamnopyranosyl linkages in the backbone of the hairy regions of pectins. The chain is Probable rhamnogalacturonase E (rhgE) from Aspergillus flavus (strain ATCC 200026 / FGSC A1120 / IAM 13836 / NRRL 3357 / JCM 12722 / SRRC 167).